We begin with the raw amino-acid sequence, 554 residues long: Kinesin-like protein 3 (554 aa).

The Kinesin motor domain maps to 3–325 (SIKVVCRIRP…LRFGHRAKSI (323 aa)). Residues 84–91 (GQTGSGKT) and 233–240 (GSESVGKS) each bind ATP. Positions 446–473 (LSSTKQQLSDLMTALGDAQERYVELVKN) form a coiled coil.

This sequence belongs to the TRAFAC class myosin-kinesin ATPase superfamily. Kinesin family.

Its subcellular location is the cytoplasm. It localises to the cytoskeleton. Functionally, cytoplasmic motor that could play a role in Golgi membrane recycling. The polypeptide is Kinesin-like protein 3 (klp3) (Schizosaccharomyces pombe (strain 972 / ATCC 24843) (Fission yeast)).